The primary structure comprises 570 residues: MSQDAAIAEQTPVEHLSAVDSASHSVLSTPSNKAERDEIKAYGEGEEHEPVVEIPKRPASAYVTVSIMCIMIAFGGFVFGWDTGTISGFINQTDFIRRFGMKHKDGTNYLSKVRTGLIVSIFNIGCAIGGIILSKLGDMYGRKVGLIVVVVIYIIGIIIQIASINKWYQYFIGRIISGLGVGGIAVLSPMLISEVSPKHLRGTLVSCYQLMITAGIFLGYCTNFGTKNYSNSVQWRVPLGLCFAWALFMIGGMTFVPESPRYLAEVGKIEEAKRSIAVSNKVAVDDPSVLAEVEAVLAGVEAEKLAGNASWGELFSSKTKVLQRLIMGAMIQSLQQLTGDNYFFYYGTTIFKAVGLSDSFETSIVLGIVNFASTFVGIYVVERYGRRTCLLWGAASMTACMVVYASVGVTRLWPNGQDQPSSKGAGNCMIVFACFYIFCFATTWAPIPYVVVSETFPLRVKSKAMSIATAANWLWGFLIGFFTPFITGAINFYYGYVFMGCLVFMFFYVLLVVPETKGLTLEEVNTMWEEGVLPWKSASWVPPSRRGANYDAEEMAHDDKPLYKRMFSTK.

At 1–60 (MSQDAAIAEQTPVEHLSAVDSASHSVLSTPSNKAERDEIKAYGEGEEHEPVVEIPKRPAS) the chain is on the cytoplasmic side. The chain crosses the membrane as a helical span at residues 61 to 81 (AYVTVSIMCIMIAFGGFVFGW). Over 82–116 (DTGTISGFINQTDFIRRFGMKHKDGTNYLSKVRTG) the chain is Extracellular. An N-linked (GlcNAc...) asparagine glycan is attached at N91. Residues 117 to 137 (LIVSIFNIGCAIGGIILSKLG) form a helical membrane-spanning segment. The Cytoplasmic portion of the chain corresponds to 138 to 143 (DMYGRK). The chain crosses the membrane as a helical span at residues 144–164 (VGLIVVVVIYIIGIIIQIASI). The Extracellular portion of the chain corresponds to 165 to 174 (NKWYQYFIGR). The helical transmembrane segment at 175–195 (IISGLGVGGIAVLSPMLISEV) threads the bilayer. At 196 to 201 (SPKHLR) the chain is on the cytoplasmic side. Residues 202-222 (GTLVSCYQLMITAGIFLGYCT) traverse the membrane as a helical segment. At 223–236 (NFGTKNYSNSVQWR) the chain is on the extracellular side. N228 carries N-linked (GlcNAc...) asparagine glycosylation. A helical membrane pass occupies residues 237-257 (VPLGLCFAWALFMIGGMTFVP). The Cytoplasmic portion of the chain corresponds to 258-340 (ESPRYLAEVG…IQSLQQLTGD (83 aa)). Residues 341-357 (NYFFYYGTTIFKAVGLS) form a helical membrane-spanning segment. The Extracellular portion of the chain corresponds to 358–363 (DSFETS). Residues 364 to 381 (IVLGIVNFASTFVGIYVV) traverse the membrane as a helical segment. Residues 382–388 (ERYGRRT) lie on the Cytoplasmic side of the membrane. The chain crosses the membrane as a helical span at residues 389–409 (CLLWGAASMTACMVVYASVGV). Over 410–431 (TRLWPNGQDQPSSKGAGNCMIV) the chain is Extracellular. A helical membrane pass occupies residues 432–452 (FACFYIFCFATTWAPIPYVVV). Residues 453–469 (SETFPLRVKSKAMSIAT) lie on the Cytoplasmic side of the membrane. The helical transmembrane segment at 470 to 490 (AANWLWGFLIGFFTPFITGAI) threads the bilayer. Position 491 (N491) is a topological domain, extracellular. The helical transmembrane segment at 492–512 (FYYGYVFMGCLVFMFFYVLLV) threads the bilayer. Residues 513 to 570 (VPETKGLTLEEVNTMWEEGVLPWKSASWVPPSRRGANYDAEEMAHDDKPLYKRMFSTK) lie on the Cytoplasmic side of the membrane. K560 is covalently cross-linked (Glycyl lysine isopeptide (Lys-Gly) (interchain with G-Cter in ubiquitin)).

This sequence belongs to the major facilitator superfamily. Sugar transporter (TC 2.A.1.1) family.

It localises to the membrane. Functionally, high-affinity glucose transporter. In Saccharomyces cerevisiae (strain ATCC 204508 / S288c) (Baker's yeast), this protein is High-affinity hexose transporter HXT6 (HXT6).